A 471-amino-acid polypeptide reads, in one-letter code: Citrate synthase, mitochondrial (471 aa).

A mitochondrion-targeting transit peptide spans 1–18 (MASLRSATALSRLRSRAG). Residues His-307, His-353, and Asp-408 contribute to the active site.

It belongs to the citrate synthase family. As to quaternary structure, homodimer.

Its subcellular location is the mitochondrion matrix. The enzyme catalyses oxaloacetate + acetyl-CoA + H2O = citrate + CoA + H(+). It participates in carbohydrate metabolism; tricarboxylic acid cycle; isocitrate from oxaloacetate: step 1/2. The chain is Citrate synthase, mitochondrial (CIT) from Citrus maxima (Pomelo).